Here is a 683-residue protein sequence, read N- to C-terminus: Synaptic vesicle glycoprotein 2B (683 aa).

Over residues 1–10 (MDDYRYRDNY) the composition is skewed to basic and acidic residues. Residues 1–72 (MDDYRYRDNY…QTKMAPSRAD (72 aa)) form a disordered region. The Cytoplasmic segment spans residues 1-110 (MDDYRYRDNY…ECGHGRFQWT (110 aa)). At Ser-33 the chain carries Phosphoserine. Thr-36 bears the Phosphothreonine mark. The chain crosses the membrane as a helical span at residues 111–131 (LFFVLVLALMADGVEVFVVSF). Topologically, residues 132–148 (ALPSAEKDMCLSSSKKG) are extracellular. The chain crosses the membrane as a helical span at residues 149–169 (MLGLIVYLGMMAGAFILGGLA). At 170–182 (DKLGRKKVLSMSL) the chain is on the cytoplasmic side. The helical transmembrane segment at 183–203 (AINASFASLSSFVQGYGAFLF) threads the bilayer. The Extracellular portion of the chain corresponds to 204–205 (CR). The helical transmembrane segment at 206–226 (LISGIGIGGSLPIVFAYFSEF) threads the bilayer. The Cytoplasmic segment spans residues 227-237 (LSREKRGEHLS). The helical transmembrane segment at 238–258 (WLGIFWMTGGIYASAMAWSII) threads the bilayer. Topologically, residues 259-277 (PHYGWGFSMGTNYHFHSWR) are extracellular. The helical transmembrane segment at 278 to 298 (VFVIVCALPATVSMVALKFMP) threads the bilayer. Over 299 to 390 (ESPRFLLEMG…CVMGPYRMNT (92 aa)) the chain is Cytoplasmic. Residues 391 to 411 (LILAVVWFTMALSYYGLTVWF) form a helical membrane-spanning segment. Residues 412–535 (PDMIRYFQDE…CHMDFEEDND (124 aa)) are Extracellular-facing. Tyr-423 bears the Phosphotyrosine mark. 3 N-linked (GlcNAc...) asparagine glycosylation sites follow: Asn-441, Asn-491, and Asn-516. Residues 536 to 556 (FLIYLVSFLGSLSVLPGNIIS) traverse the membrane as a helical segment. The Cytoplasmic portion of the chain corresponds to 557–565 (ALLMDRIGR). The chain crosses the membrane as a helical span at residues 566–586 (LKMIGGSMLISAVCCFFLFFG). Residues 587–592 (NSESAM) are Extracellular-facing. A helical membrane pass occupies residues 593-613 (IGWQCLFCGTSIAAWNALDVI). Residues 614–626 (TVELYPTNQRATA) are Cytoplasmic-facing. A helical transmembrane segment spans residues 627 to 649 (FGILNGLCKLGAILGNTIFASFV). Over 650–653 (GITK) the chain is Extracellular. The chain crosses the membrane as a helical span at residues 654–672 (VVPILLAAASLVGGGLVAL). Over 673–683 (RLPETREQVLM) the chain is Cytoplasmic.

The protein belongs to the major facilitator superfamily. In terms of assembly, interacts with SYT1 in a calcium-independent manner. Forms a complex with SYT1, syntaxin-1 and SNAP25. (Microbial infection) Interacts with C.botulinum neurotoxin type A1 and type A2 (BoNT/A, botA). Interaction is improved by glycosylation of SV2. As to quaternary structure, (Microbial infection) Interacts with C.botulinum neurotoxin type D (BoNT/D, botD). In terms of assembly, (Microbial infection) Interacts with C.botulinum neurotoxin type E (BoNT/E). Interaction requires glycosylation of SV2 proteins. (Microbial infection) Interacts with C.botulinum neurotoxin type F (BoNT/F). Interaction requires glycosylation of SV2 proteins. N-glycosylated. Post-translationally, the N-terminal cytoplasmic domain is phosphorylated by CK1. As to expression, widely expressed throughout the brain. Specifically expressed by pinealocytes in the pineal gland. Also detected in testis (at protein level). Specifically expressed in neural tissues. Expressed in the spinal cord and in all brain regions with a stronger expression in hippocampus and cortex.

It is found in the cytoplasmic vesicle. The protein localises to the secretory vesicle. Its subcellular location is the synaptic vesicle membrane. The protein resides in the acrosome. In terms of biological role, probably plays a role in the control of regulated secretion in neural and endocrine cells. (Microbial infection) Receptor for C.botulinum neurotoxin type A (BoNT/A, botA); the toxin binds via extracellular loop 4. Restores uptake of BoNT/A in mouse and rat cells that are deleted for SV2 receptor. Glycosylation of SV2B is not essential for receptor activity, but enhances the interaction. Also serves as a receptor for the closely related C.botulinum neurotoxin type A2; glycosylation is not essential but enhances the interaction. Functionally, (Microbial infection) Possible receptor for C.botulinum neurotoxin type D (BoNT/D, botD); BoNT/D does not bind to extracellular loop 4 as do BoNT/A and BoNT/E. Another group does not find a convincing interaction with SV2. Its function is as follows. (Microbial infection) Receptor for C.botulinum neurotoxin type E (BoNT/E); the toxin probably binds via extracellular loop 4. Restores uptake of BoNT/E in mouse cells that are deleted for SV2 receptor. Glycosylation of SV2B is not essential for receptor activity, but enhances the interaction. In terms of biological role, (Microbial infection) Receptor for C.botulinum neurotoxin type F (BoNT/F); binding requires glycosylation of this protein. The chain is Synaptic vesicle glycoprotein 2B (Sv2b) from Rattus norvegicus (Rat).